A 180-amino-acid chain; its full sequence is ATP synthase subunit delta (180 aa).

Belongs to the ATPase delta chain family. In terms of assembly, F-type ATPases have 2 components, F(1) - the catalytic core - and F(0) - the membrane proton channel. F(1) has five subunits: alpha(3), beta(3), gamma(1), delta(1), epsilon(1). F(0) has three main subunits: a(1), b(2) and c(10-14). The alpha and beta chains form an alternating ring which encloses part of the gamma chain. F(1) is attached to F(0) by a central stalk formed by the gamma and epsilon chains, while a peripheral stalk is formed by the delta and b chains.

It is found in the cell membrane. Functionally, f(1)F(0) ATP synthase produces ATP from ADP in the presence of a proton or sodium gradient. F-type ATPases consist of two structural domains, F(1) containing the extramembraneous catalytic core and F(0) containing the membrane proton channel, linked together by a central stalk and a peripheral stalk. During catalysis, ATP synthesis in the catalytic domain of F(1) is coupled via a rotary mechanism of the central stalk subunits to proton translocation. Its function is as follows. This protein is part of the stalk that links CF(0) to CF(1). It either transmits conformational changes from CF(0) to CF(1) or is implicated in proton conduction. This chain is ATP synthase subunit delta, found in Latilactobacillus sakei subsp. sakei (strain 23K) (Lactobacillus sakei subsp. sakei).